We begin with the raw amino-acid sequence, 442 residues long: D-serine dehydratase (442 aa).

Lys118 is subject to N6-(pyridoxal phosphate)lysine.

It belongs to the serine/threonine dehydratase family. DsdA subfamily. As to quaternary structure, monomer. Requires pyridoxal 5'-phosphate as cofactor.

It catalyses the reaction D-serine = pyruvate + NH4(+). This chain is D-serine dehydratase, found in Escherichia coli O157:H7.